Consider the following 458-residue polypeptide: 3-isopropylmalate dehydratase large subunit (458 aa).

[4Fe-4S] cluster-binding residues include cysteine 339, cysteine 399, and cysteine 402.

This sequence belongs to the aconitase/IPM isomerase family. LeuC type 1 subfamily. Heterodimer of LeuC and LeuD. Requires [4Fe-4S] cluster as cofactor.

It carries out the reaction (2R,3S)-3-isopropylmalate = (2S)-2-isopropylmalate. The protein operates within amino-acid biosynthesis; L-leucine biosynthesis; L-leucine from 3-methyl-2-oxobutanoate: step 2/4. Catalyzes the isomerization between 2-isopropylmalate and 3-isopropylmalate, via the formation of 2-isopropylmaleate. The chain is 3-isopropylmalate dehydratase large subunit from Lactococcus lactis subsp. cremoris (strain SK11).